Here is an 895-residue protein sequence, read N- to C-terminus: DNA mismatch repair protein MutS (895 aa).

632–639 (GPNMAGKS) contacts ATP. Residues 824–849 (VTQDKKQVKKQTKNNHSARSGSRQQQ) form a disordered region. Residues 837 to 849 (NNHSARSGSRQQQ) show a composition bias toward polar residues.

It belongs to the DNA mismatch repair MutS family.

Functionally, this protein is involved in the repair of mismatches in DNA. It is possible that it carries out the mismatch recognition step. This protein has a weak ATPase activity. The protein is DNA mismatch repair protein MutS of Desulforapulum autotrophicum (strain ATCC 43914 / DSM 3382 / VKM B-1955 / HRM2) (Desulfobacterium autotrophicum).